Here is a 695-residue protein sequence, read N- to C-terminus: MSLLLVSLLAFLTLGSGCHHRICHCSNGVFLCQESKVTEIPPDLPRNAVELRFVLTKLRVIPKGAFSGFGDLEKIEISQNDVLEVIEANVFSNLPKLHEIRIEKANNLLYIDPDAFQNLPNLRYLLISNTGVKHLPAVHKIQSLQKVLLDIQDNINIHTVERNSFVGLSFESMILWLSKNGIREIHNCAFNGTQLDELNLSDNDNLEELPNDVFQGASGPVILDISRTRIHSLPSYGLENLKKLRAKSTYNLKKLPSLEKFVTLMEASLTYPSHCCAFANWRRQISDLHPICNKSILRQEVDVMTQARGQRVSLAEDGESSLAKEFDTMYSEFDYDLCNEVVDVICSPEPDTFNPCEDIMGHDILRVLIWFISILAITGNIIVLVILITSQYKLTVPRFLMCNLAFADLCIGIYLLLIASVDIHTKTQYHNYAIDWQTGAGCDAAGFFTVFASELSVYTLTAITLERWHTITHAMQLQCKVQLRHAASIMLVGWIFAFTVALFPIFGISSYMKVSICLPMDIDSPLSQLYVVSLLVLNVLAFVVICGCYTHIYLTVRNPNIMSSSSDTKIAKRMAMLIFTDFLCMAPISFFAISASLKVPLITVSKSKILLVLFYPINSCANPFLYAIFTKNFRRDVFILLSKFGCYEMQAQTYRTENLSTAHNIHPRNGHCPPAPRITNSSSYTLIPLSRLAQN.

Positions 1-17 (MSLLLVSLLAFLTLGSG) are cleaved as a signal peptide. 2 disulfides stabilise this stretch: Cys18/Cys25 and Cys23/Cys32. In terms of domain architecture, LRRNT spans 18-46 (CHHRICHCSNGVFLCQESKVTEIPPDLPR). Residues 18–366 (CHHRICHCSN…EDIMGHDILR (349 aa)) lie on the Extracellular side of the membrane. LRR repeat units follow at residues 49–72 (VELR…FGDL), 73–97 (EKIE…LPKL), 98–118 (HEIR…AFQN), 119–143 (LPNL…KIQS), 144–169 (LQKV…VGLS), 170–192 (FESM…AFNG), 193–216 (TQLD…VFQG), 217–240 (ASGP…GLEN), and 241–259 (LKKL…PSLE). Asn191 and Asn199 each carry an N-linked (GlcNAc...) asparagine glycan. 4 disulfide bridges follow: Cys275-Cys346, Cys276-Cys292, Cys276-Cys356, and Cys292-Cys338. Asn293 is a glycosylation site (N-linked (GlcNAc...) asparagine). At Tyr335 the chain carries Sulfotyrosine. The chain crosses the membrane as a helical span at residues 367–387 (VLIWFISILAITGNIIVLVIL). The Cytoplasmic portion of the chain corresponds to 388 to 398 (ITSQYKLTVPR). A helical transmembrane segment spans residues 399–421 (FLMCNLAFADLCIGIYLLLIASV). Topologically, residues 422–443 (DIHTKTQYHNYAIDWQTGAGCD) are extracellular. A disulfide bond links Cys442 and Cys517. A helical membrane pass occupies residues 444–465 (AAGFFTVFASELSVYTLTAITL). At 466 to 485 (ERWHTITHAMQLQCKVQLRH) the chain is on the cytoplasmic side. Residues 486–508 (AASIMLVGWIFAFTVALFPIFGI) form a helical membrane-spanning segment. Over 509–528 (SSYMKVSICLPMDIDSPLSQ) the chain is Extracellular. Residues 529 to 550 (LYVVSLLVLNVLAFVVICGCYT) traverse the membrane as a helical segment. Residues 551–573 (HIYLTVRNPNIMSSSSDTKIAKR) are Cytoplasmic-facing. Residues 574-597 (MAMLIFTDFLCMAPISFFAISASL) traverse the membrane as a helical segment. At 598–608 (KVPLITVSKSK) the chain is on the extracellular side. Residues 609–630 (ILLVLFYPINSCANPFLYAIFT) traverse the membrane as a helical segment. Over 631 to 695 (KNFRRDVFIL…LIPLSRLAQN (65 aa)) the chain is Cytoplasmic.

This sequence belongs to the G-protein coupled receptor 1 family. FSH/LSH/TSH subfamily. Homotrimer. Functions as a homotrimer binding the FSH hormone heterodimer composed of CGA and FSHB. Interacts with ARRB2. Interacts with APPL2; interaction is independent of follicle stimulating hormone stimulation. In terms of processing, N-glycosylated; indirectly required for FSH-binding, possibly via a conformational change that allows high affinity binding of hormone. Sulfated.

The protein localises to the cell membrane. G protein-coupled receptor for follitropin, the follicle-stimulating hormone. Through cAMP production activates the downstream PI3K-AKT and ERK1/ERK2 signaling pathways. In Sus scrofa (Pig), this protein is Follicle-stimulating hormone receptor (FSHR).